The primary structure comprises 425 residues: Serine--tRNA ligase (425 aa).

Disordered regions lie at residues 43 to 68 (QRSSLQAEGNRIGKEVGQRIQQGSDP) and 108 to 131 (LPNLPSPDCPEGRDENDNQERHCW). The span at 117–131 (PEGRDENDNQERHCW) shows a compositional bias: basic and acidic residues. 233 to 235 (TAE) contacts L-serine. 264–266 (RRE) contributes to the ATP binding site. Glu287 provides a ligand contact to L-serine. 351-354 (EISS) is a binding site for ATP. Ser385 serves as a coordination point for L-serine.

The protein belongs to the class-II aminoacyl-tRNA synthetase family. Type-1 seryl-tRNA synthetase subfamily. Homodimer. The tRNA molecule binds across the dimer.

It is found in the cytoplasm. It carries out the reaction tRNA(Ser) + L-serine + ATP = L-seryl-tRNA(Ser) + AMP + diphosphate + H(+). It catalyses the reaction tRNA(Sec) + L-serine + ATP = L-seryl-tRNA(Sec) + AMP + diphosphate + H(+). It functions in the pathway aminoacyl-tRNA biosynthesis; selenocysteinyl-tRNA(Sec) biosynthesis; L-seryl-tRNA(Sec) from L-serine and tRNA(Sec): step 1/1. Functionally, catalyzes the attachment of serine to tRNA(Ser). Is also able to aminoacylate tRNA(Sec) with serine, to form the misacylated tRNA L-seryl-tRNA(Sec), which will be further converted into selenocysteinyl-tRNA(Sec). The polypeptide is Serine--tRNA ligase (Prochlorococcus marinus (strain MIT 9303)).